A 77-amino-acid chain; its full sequence is Conotoxin VnMKLT1-012 (77 aa).

Positions 1–22 are cleaved as a signal peptide; it reads MKLTCMMIVAVLFLTAWTFVTA. A propeptide spanning residues 23–48 is cleaved from the precursor; sequence DDSRNGLDYLFPKARHEMNPKASRDI. Disulfide bonds link cysteine 51–cysteine 68, cysteine 58–cysteine 72, and cysteine 67–cysteine 76.

It belongs to the conotoxin O1 superfamily. In terms of tissue distribution, expressed by the venom duct.

It is found in the secreted. This Conus ventricosus (Mediterranean cone) protein is Conotoxin VnMKLT1-012.